A 406-amino-acid chain; its full sequence is Bifunctional enzyme IspD/IspF (406 aa).

Positions 1–247 (MSLIRVNGEA…ALFFNPAKDT (247 aa)) are 2-C-methyl-D-erythritol 4-phosphate cytidylyltransferase. The interval 248-406 (FIGMGFDTHA…HVSMRYKQKL (159 aa)) is 2-C-methyl-D-erythritol 2,4-cyclodiphosphate synthase. A divalent metal cation contacts are provided by Asp254 and His256. 4-CDP-2-C-methyl-D-erythritol 2-phosphate-binding positions include 254-256 (DTH) and 280-281 (HS). His288 serves as a coordination point for a divalent metal cation. 4-CDP-2-C-methyl-D-erythritol 2-phosphate is bound by residues 302-304 (DIG), 307-311 (FPDND), 378-381 (TTME), Phe385, and Lys388.

This sequence in the N-terminal section; belongs to the IspD/TarI cytidylyltransferase family. IspD subfamily. It in the C-terminal section; belongs to the IspF family. It depends on a divalent metal cation as a cofactor.

It carries out the reaction 2-C-methyl-D-erythritol 4-phosphate + CTP + H(+) = 4-CDP-2-C-methyl-D-erythritol + diphosphate. The catalysed reaction is 4-CDP-2-C-methyl-D-erythritol 2-phosphate = 2-C-methyl-D-erythritol 2,4-cyclic diphosphate + CMP. It participates in isoprenoid biosynthesis; isopentenyl diphosphate biosynthesis via DXP pathway; isopentenyl diphosphate from 1-deoxy-D-xylulose 5-phosphate: step 2/6. It functions in the pathway isoprenoid biosynthesis; isopentenyl diphosphate biosynthesis via DXP pathway; isopentenyl diphosphate from 1-deoxy-D-xylulose 5-phosphate: step 4/6. Its function is as follows. Bifunctional enzyme that catalyzes the formation of 4-diphosphocytidyl-2-C-methyl-D-erythritol from CTP and 2-C-methyl-D-erythritol 4-phosphate (MEP) (IspD), and catalyzes the conversion of 4-diphosphocytidyl-2-C-methyl-D-erythritol 2-phosphate (CDP-ME2P) to 2-C-methyl-D-erythritol 2,4-cyclodiphosphate (ME-CPP) with a corresponding release of cytidine 5-monophosphate (CMP) (IspF). The chain is Bifunctional enzyme IspD/IspF from Helicobacter pylori (strain P12).